Consider the following 179-residue polypeptide: Large ribosomal subunit protein bL17 (179 aa).

Positions 123 to 179 (RTRGTDTLPDTVTDTGPDSAPDPVPGSEPGSAAGDLPDADTAPADPGESSSNQRVIR) are disordered. The span at 154-168 (AAGDLPDADTAPADP) shows a compositional bias: low complexity. The segment covering 170 to 179 (ESSSNQRVIR) has biased composition (polar residues).

Belongs to the bacterial ribosomal protein bL17 family. In terms of assembly, part of the 50S ribosomal subunit. Contacts protein L32.

The chain is Large ribosomal subunit protein bL17 from Tropheryma whipplei (strain Twist) (Whipple's bacillus).